A 136-amino-acid chain; its full sequence is Transcription antitermination protein NusB (136 aa).

Belongs to the NusB family.

Its function is as follows. Involved in transcription antitermination. Required for transcription of ribosomal RNA (rRNA) genes. Binds specifically to the boxA antiterminator sequence of the ribosomal RNA (rrn) operons. This is Transcription antitermination protein NusB from Arthrobacter sp. (strain FB24).